We begin with the raw amino-acid sequence, 268 residues long: Glutamate racemase (268 aa).

Substrate-binding positions include 9 to 10 and 41 to 42; these read DS and YG. Cysteine 73 acts as the Proton donor/acceptor in catalysis. 74–75 is a binding site for substrate; the sequence is NS. The active-site Proton donor/acceptor is the cysteine 183. 184-185 is a substrate binding site; that stretch reads TH.

It belongs to the aspartate/glutamate racemases family.

The enzyme catalyses L-glutamate = D-glutamate. The protein operates within cell wall biogenesis; peptidoglycan biosynthesis. In terms of biological role, provides the (R)-glutamate required for cell wall biosynthesis. This is Glutamate racemase from Shewanella piezotolerans (strain WP3 / JCM 13877).